Reading from the N-terminus, the 591-residue chain is Ketol-acid reductoisomerase, chloroplastic (591 aa).

Positions 1–20 are disordered; the sequence is MAAATSSIAPSLSCPSPSSS. The transit peptide at 1 to 52 directs the protein to the chloroplast; the sequence is MAAATSSIAPSLSCPSPSSSSKTLWSSKARTLALPNIGFLSSSSKSLRSLTA. Thr53 bears the N-acetylthreonine mark. A KARI N-terminal Rossmann domain is found at 102–300; that stretch reads VRGGRDLFKH…ALGSPFTFAT (199 aa). Residues 123–130, 156–161, and 195–199 contribute to the NADP(+) site; these read GVIGWGSQ, RKGSRS, and SDAAQ. His220 is an active-site residue. KARI C-terminal knotted domains lie at 301–449 and 450–586; these read TLEQ…RPAG and DLGP…RPEL. Positions 309, 313, 486, and 490 each coordinate Mg(2+). A substrate-binding site is contributed by Ser512.

Belongs to the ketol-acid reductoisomerase family. Homodimer. Mg(2+) serves as cofactor.

It localises to the plastid. The protein localises to the chloroplast. The enzyme catalyses (2R)-2,3-dihydroxy-3-methylbutanoate + NADP(+) = (2S)-2-acetolactate + NADPH + H(+). The catalysed reaction is (2R,3R)-2,3-dihydroxy-3-methylpentanoate + NADP(+) = (S)-2-ethyl-2-hydroxy-3-oxobutanoate + NADPH + H(+). The protein operates within amino-acid biosynthesis; L-isoleucine biosynthesis; L-isoleucine from 2-oxobutanoate: step 2/4. It participates in amino-acid biosynthesis; L-valine biosynthesis; L-valine from pyruvate: step 2/4. The chain is Ketol-acid reductoisomerase, chloroplastic from Arabidopsis thaliana (Mouse-ear cress).